A 355-amino-acid polypeptide reads, in one-letter code: Carbohydrate sulfotransferase 10 (355 aa).

The Cytoplasmic portion of the chain corresponds to 1–6; that stretch reads MHHRWL. A helical; Signal-anchor for type II membrane protein transmembrane segment spans residues 7–27; it reads LLVACFWVLFMLMVASKLITL. Residues 28 to 355 lie on the Lumenal side of the membrane; it reads TMKDPEGYGN…FGYKEPTFLF (328 aa). 2 N-linked (GlcNAc...) asparagine glycosylation sites follow: Asn93 and Asn98. Residues 126 to 132 and 188 to 196 contribute to the 3'-phosphoadenylyl sulfate site; these read PKVGNTQ and RDPFERLIS. Residue Asn316 is glycosylated (N-linked (GlcNAc...) asparagine).

This sequence belongs to the sulfotransferase 2 family.

It localises to the golgi apparatus membrane. Functionally, catalyzes the transfer of sulfate to position 3 of terminal glucuronic acid of both protein- and lipid-linked oligosaccharides. Participates in biosynthesis of HNK-1 carbohydrate structure, a sulfated glucuronyl-lactosaminyl residue carried by many neural recognition molecules. The chain is Carbohydrate sulfotransferase 10 (chst10) from Xenopus laevis (African clawed frog).